A 130-amino-acid chain; its full sequence is Small ribosomal subunit protein uS11 (130 aa).

It belongs to the universal ribosomal protein uS11 family. As to quaternary structure, part of the 30S ribosomal subunit. Interacts with proteins S7 and S18. Binds to IF-3.

Located on the platform of the 30S subunit, it bridges several disparate RNA helices of the 16S rRNA. Forms part of the Shine-Dalgarno cleft in the 70S ribosome. The polypeptide is Small ribosomal subunit protein uS11 (Thiobacillus denitrificans (strain ATCC 25259 / T1)).